Consider the following 992-residue polypeptide: Probable translation initiation factor IF-2 (992 aa).

The DOD-type homing endonuclease domain maps to 96-220 (KNWHGVTVTP…LSLALLRFGI (125 aa)). In terms of domain architecture, tr-type G spans 399–616 (TTETHNFIAN…LIAGLSQRYL (218 aa)). GTP contacts are provided by residues 472–476 (DTPGH) and 526–529 (NKID).

This sequence belongs to the TRAFAC class translation factor GTPase superfamily. Classic translation factor GTPase family. IF-2 subfamily. Post-translationally, this protein undergoes a protein self splicing that involves a post-translational excision of the intervening region (intein) followed by peptide ligation.

Functionally, function in general translation initiation by promoting the binding of the formylmethionine-tRNA to ribosomes. Seems to function along with eIF-2. The chain is Probable translation initiation factor IF-2 (infB) from Pyrococcus abyssi (strain GE5 / Orsay).